Consider the following 491-residue polypeptide: Endoglucanase 14 (491 aa).

An N-terminal signal peptide occupies residues 1-31; the sequence is MSQLKIGSSQCLWTSICIVLFVLSMARGAVS. Aspartate 86 functions as the Nucleophile in the catalytic mechanism. N-linked (GlcNAc...) asparagine glycosylation occurs at asparagine 397. Residues histidine 413, aspartate 465, and glutamate 474 contribute to the active site.

This sequence belongs to the glycosyl hydrolase 9 (cellulase E) family.

The protein localises to the secreted. It carries out the reaction Endohydrolysis of (1-&gt;4)-beta-D-glucosidic linkages in cellulose, lichenin and cereal beta-D-glucans.. In Arabidopsis thaliana (Mouse-ear cress), this protein is Endoglucanase 14.